Reading from the N-terminus, the 432-residue chain is Glutamate-1-semialdehyde 2,1-aminomutase 2 (432 aa).

N6-(pyridoxal phosphate)lysine is present on K268.

This sequence belongs to the class-III pyridoxal-phosphate-dependent aminotransferase family. HemL subfamily. Homodimer. Pyridoxal 5'-phosphate is required as a cofactor.

The protein resides in the cytoplasm. The enzyme catalyses (S)-4-amino-5-oxopentanoate = 5-aminolevulinate. The protein operates within porphyrin-containing compound metabolism; protoporphyrin-IX biosynthesis; 5-aminolevulinate from L-glutamyl-tRNA(Glu): step 2/2. This chain is Glutamate-1-semialdehyde 2,1-aminomutase 2, found in Listeria monocytogenes serotype 4b (strain F2365).